Reading from the N-terminus, the 111-residue chain is Large ribosomal subunit protein eL33z (111 aa).

The protein belongs to the eukaryotic ribosomal protein eL33 family.

The chain is Large ribosomal subunit protein eL33z (RPL35AB) from Arabidopsis thaliana (Mouse-ear cress).